The primary structure comprises 395 residues: MTKTLAVNAGSSSMKWQMYEMPEEKVLAKGLIERIGLKDSIVTVKFGEQKEERVFDIPNHTEAVEVLLEDLKRLKIVEEFTEITGVGHRVVAGGEIFQKSTVVTPEVLQQVKDLSALAPLHNPANAAGIEAFLNLLPDATSVVVFDTAFHTTMPEKAFRYPLPKKYYTDYAVRKYGAHGTSHMYVSQEAAKLLGKPIEETKIITAHIGNGASLTAVKGGKSIDTSMGFTPLAGVMMGTRTGEMDPSVFPYLIENDSELKDAQGVVDMMNKESGLYGVSGISSDMRDIIAAKDTDTDAKLAFEMYVDRIQKFIGQYLAVLNGADALVFTAGIGENSVPVREAILSGLTWFGIEVDPEKNVFGVEGEISTPHSRVKVFVIPTDEELVIARDVEALKK.

Residue Asn8 coordinates Mg(2+). Lys15 contacts ATP. A substrate-binding site is contributed by Arg89. The active-site Proton donor/acceptor is the Asp146. ATP is bound by residues 206–210, 283–285, and 330–334; these read HIGNG, DMR, and GIGEN. Glu382 provides a ligand contact to Mg(2+).

This sequence belongs to the acetokinase family. As to quaternary structure, homodimer. It depends on Mg(2+) as a cofactor. Mn(2+) serves as cofactor.

It localises to the cytoplasm. The catalysed reaction is acetate + ATP = acetyl phosphate + ADP. It functions in the pathway metabolic intermediate biosynthesis; acetyl-CoA biosynthesis; acetyl-CoA from acetate: step 1/2. In terms of biological role, catalyzes the formation of acetyl phosphate from acetate and ATP. Can also catalyze the reverse reaction. The polypeptide is Acetate kinase 1 (Lactococcus lactis subsp. lactis (strain IL1403) (Streptococcus lactis)).